The chain runs to 499 residues: Probable cytosol aminopeptidase (499 aa).

Residues Lys-263 and Asp-268 each coordinate Mn(2+). Lys-275 is a catalytic residue. Mn(2+) is bound by residues Asp-286, Asp-345, and Glu-347. The active site involves Arg-349.

Belongs to the peptidase M17 family. Mn(2+) is required as a cofactor.

Its subcellular location is the cytoplasm. It catalyses the reaction Release of an N-terminal amino acid, Xaa-|-Yaa-, in which Xaa is preferably Leu, but may be other amino acids including Pro although not Arg or Lys, and Yaa may be Pro. Amino acid amides and methyl esters are also readily hydrolyzed, but rates on arylamides are exceedingly low.. The catalysed reaction is Release of an N-terminal amino acid, preferentially leucine, but not glutamic or aspartic acids.. Presumably involved in the processing and regular turnover of intracellular proteins. Catalyzes the removal of unsubstituted N-terminal amino acids from various peptides. This Chlamydia trachomatis serovar A (strain ATCC VR-571B / DSM 19440 / HAR-13) protein is Probable cytosol aminopeptidase.